Here is a 471-residue protein sequence, read N- to C-terminus: Tryptophanase (471 aa).

N6-(pyridoxal phosphate)lysine is present on lysine 256.

The protein belongs to the beta-eliminating lyase family. As to quaternary structure, homotetramer. The cofactor is pyridoxal 5'-phosphate.

The catalysed reaction is L-tryptophan + H2O = indole + pyruvate + NH4(+). The protein operates within amino-acid degradation; L-tryptophan degradation via pyruvate pathway; indole and pyruvate from L-tryptophan: step 1/1. The polypeptide is Tryptophanase (Salinibacter ruber (strain DSM 13855 / M31)).